We begin with the raw amino-acid sequence, 394 residues long: Elongation factor Tu (394 aa).

Residues 10–204 (KEHVNVGTIG…AVDTYIENPV (195 aa)) enclose the tr-type G domain. A G1 region spans residues 19-26 (GHVDHGKT). Residue 19–26 (GHVDHGKT) participates in GTP binding. Mg(2+) is bound at residue Thr-26. Residues 60–64 (GITIN) are G2. The G3 stretch occupies residues 81 to 84 (DCPG). GTP-binding positions include 81 to 85 (DCPGH) and 136 to 139 (NKCD). The interval 136-139 (NKCD) is G4. The segment at 174–176 (SAL) is G5.

This sequence belongs to the TRAFAC class translation factor GTPase superfamily. Classic translation factor GTPase family. EF-Tu/EF-1A subfamily. Monomer.

The protein resides in the cytoplasm. The catalysed reaction is GTP + H2O = GDP + phosphate + H(+). In terms of biological role, GTP hydrolase that promotes the GTP-dependent binding of aminoacyl-tRNA to the A-site of ribosomes during protein biosynthesis. The chain is Elongation factor Tu from Mycoplasmopsis synoviae (strain 53) (Mycoplasma synoviae).